Consider the following 150-residue polypeptide: uncharacterized protein (150 aa).

Residues 19–93 (GAQDYVLVDV…SSKRLALRES (75 aa)) form the Rhodanese domain.

This is an uncharacterized protein from Synechococcus elongatus.